Reading from the N-terminus, the 107-residue chain is Small ribosomal subunit protein uS17 (107 aa).

This sequence belongs to the universal ribosomal protein uS17 family. In terms of assembly, part of the 30S ribosomal subunit.

In terms of biological role, one of the primary rRNA binding proteins, it binds specifically to the 5'-end of 16S ribosomal RNA. This chain is Small ribosomal subunit protein uS17, found in Nitrosopumilus maritimus (strain SCM1).